A 669-amino-acid polypeptide reads, in one-letter code: Carnitine O-palmitoyltransferase 2, mitochondrial (669 aa).

The transit peptide at 1 to 36 directs the protein to the mitochondrion; that stretch reads MMAGLLSTQCNSTLSKLKHLSNNPALSVLTSTHRKY. Residues 37–190 lie on the Mitochondrial matrix side of the membrane; it reads SSKDGAGSEY…GLLEPEVFHL (154 aa). Residues 191–220 constitute an intramembrane region (note=Mitochondrial inner membrane); sequence NPAKSDTDSFKKLIRWVPPSISWFGAYMVN. Over 221-669 the chain is Mitochondrial matrix; sequence AYPLDMSQYF…FTVLDGNPIH (449 aa). His384 functions as the Proton acceptor in the catalytic mechanism. 464 to 476 contacts CoA; the sequence is GKEQLKKKKLSPD. (R)-carnitine contacts are provided by Tyr498, Ser500, and Thr511.

The protein belongs to the carnitine/choline acetyltransferase family.

Its subcellular location is the mitochondrion inner membrane. It catalyses the reaction (R)-carnitine + hexadecanoyl-CoA = O-hexadecanoyl-(R)-carnitine + CoA. The enzyme catalyses octanoyl-CoA + (R)-carnitine = O-octanoyl-(R)-carnitine + CoA. The catalysed reaction is decanoyl-CoA + (R)-carnitine = O-decanoyl-(R)-carnitine + CoA. It carries out the reaction dodecanoyl-CoA + (R)-carnitine = O-dodecanoyl-R-carnitine + CoA. It catalyses the reaction tetradecanoyl-CoA + (R)-carnitine = O-tetradecanoyl-(R)-carnitine + CoA. The enzyme catalyses (R)-carnitine + octadecanoyl-CoA = O-octadecanoyl-(R)-carnitine + CoA. The catalysed reaction is eicosanoyl-CoA + (R)-carnitine = O-eicosanoyl-(R)-carnitine + CoA. It carries out the reaction (9Z)-tetradecenoyl-CoA + (R)-carnitine = O-(9Z)-tetradecenoyl-(R)-carnitine + CoA. It catalyses the reaction (5Z)-tetradecenoyl-CoA + (R)-carnitine = O-(5Z)-tetradecenoyl-(R)-carnitine + CoA. The enzyme catalyses (R)-carnitine + (9Z)-octadecenoyl-CoA = O-(9Z)-octadecenoyl-(R)-carnitine + CoA. The catalysed reaction is 4,8-dimethylnonanoyl-CoA + (R)-carnitine = O-4,8-dimethylnonanoyl-(R)-carnitine + CoA. It functions in the pathway lipid metabolism; fatty acid beta-oxidation. In terms of biological role, involved in the intramitochondrial synthesis of acylcarnitines from accumulated acyl-CoA metabolites. Reconverts acylcarnitines back into the respective acyl-CoA esters that can then undergo beta-oxidation, an essential step for the mitochondrial uptake of long-chain fatty acids and their subsequent beta-oxidation in the mitochondrion. Active with medium (C8-C12) and long-chain (C14-C18) acyl-CoA esters. The chain is Carnitine O-palmitoyltransferase 2, mitochondrial (cpt2) from Danio rerio (Zebrafish).